The primary structure comprises 337 residues: Protein-arginine kinase (337 aa).

The Phosphagen kinase C-terminal domain occupies 12 to 240 (IVIASKVKIL…NKLILREKNQ (229 aa)). ATP-binding positions include 15–19 (ASKVK), 162–166 (RTKVF), and 193–198 (KSIYNS).

The protein belongs to the ATP:guanido phosphotransferase family.

It carries out the reaction L-arginyl-[protein] + ATP = N(omega)-phospho-L-arginyl-[protein] + ADP + H(+). Its function is as follows. Catalyzes the specific phosphorylation of arginine residues in proteins. The polypeptide is Protein-arginine kinase (Clostridium perfringens (strain 13 / Type A)).